The chain runs to 220 residues: UPF0711 protein C18orf21 (220 aa).

Positions 117-181 are disordered; it reads SRSFVSTLKS…VSTCSSKNTS (65 aa). Over residues 119–136 the composition is skewed to polar residues; it reads SFVSTLKSNPATPTSKLS. The residue at position 126 (S126) is a Phosphoserine. A phosphothreonine mark is found at T130 and T139. The segment covering 171-180 has biased composition (low complexity); sequence SVSTCSSKNT.

This sequence belongs to the UPF0711 family.

In Homo sapiens (Human), this protein is UPF0711 protein C18orf21 (C18orf21).